The primary structure comprises 621 residues: ATP-dependent DNA helicase Q1 (621 aa).

The region spanning 100 to 275 (VNATMARKDI…QKILCVEKCL (176 aa)) is the Helicase ATP-binding domain. Residue 113–120 (MPTGGGKS) participates in ATP binding. A DEVH box motif is present at residues 219 to 222 (DEVH). Residues 296–451 (SAEDFIENIA…EMVSYCQNIS (156 aa)) form the Helicase C-terminal domain. Zn(2+) contacts are provided by cysteine 453, cysteine 471, cysteine 475, and cysteine 478. An N6-acetyllysine mark is found at lysine 514 and lysine 522. Residues serine 597 and serine 602 each carry the phosphoserine modification.

This sequence belongs to the helicase family. RecQ subfamily. In terms of assembly, may form homodimers or higher order oligomers. Interacts with EXO1. Interacts with MLH1. Interacts with PARP1. Requires Mg(2+) as cofactor. It depends on Mn(2+) as a cofactor. The cofactor is Zn(2+).

It localises to the nucleus. It carries out the reaction Couples ATP hydrolysis with the unwinding of duplex DNA by translocating in the 3'-5' direction.. The enzyme catalyses ATP + H2O = ADP + phosphate + H(+). The catalysed reaction is dATP + H2O = dADP + phosphate + H(+). In terms of biological role, DNA helicase that plays a role in DNA damage repair and genome stability. Exhibits a magnesium- and ATP-dependent DNA-helicase activity that unwinds single- and double-stranded DNA in a 3'-5' direction. Plays a role in restoring regressed replication forks. Required to restart stalled replication forks induced by abortive topoisomerase 1 and 2 lesions. May play a role in the repair of DNA that is damaged by ultraviolet light or other mutagens. This is ATP-dependent DNA helicase Q1 (Recql) from Rattus norvegicus (Rat).